A 384-amino-acid chain; its full sequence is Spermidine/putrescine import ATP-binding protein PotA (384 aa).

Positions 6–238 (IAFQNVSKVF…PINHFVATFI (233 aa)) constitute an ABC transporter domain. 40 to 47 (GASGSGKS) is a binding site for ATP.

It belongs to the ABC transporter superfamily. Spermidine/putrescine importer (TC 3.A.1.11.1) family. The complex is composed of two ATP-binding proteins (PotA), two transmembrane proteins (PotB and PotC) and a solute-binding protein (PotD).

It localises to the cell membrane. It carries out the reaction ATP + H2O + polyamine-[polyamine-binding protein]Side 1 = ADP + phosphate + polyamineSide 2 + [polyamine-binding protein]Side 1.. In terms of biological role, part of the ABC transporter complex PotABCD involved in spermidine/putrescine import. Responsible for energy coupling to the transport system. The polypeptide is Spermidine/putrescine import ATP-binding protein PotA (Streptococcus thermophilus (strain ATCC BAA-491 / LMD-9)).